We begin with the raw amino-acid sequence, 145 residues long: MRLLGLDVGSKTVGVAESDPLGWTAQAVEIIPIDEEAEVFGLERVAELVKSRQVAGFVLGLPKNMNNTEGPRVEAARHYGELLEERFGLPIDYQDERLTTVQAHRMLVEEADVSRRKQKKVIDELAATLILQNYLDCHGKLCAKL.

The protein belongs to the YqgF nuclease family.

The protein localises to the cytoplasm. Could be a nuclease involved in processing of the 5'-end of pre-16S rRNA. In Limosilactobacillus fermentum (strain NBRC 3956 / LMG 18251) (Lactobacillus fermentum), this protein is Putative pre-16S rRNA nuclease.